A 548-amino-acid polypeptide reads, in one-letter code: MSSPTKLTAWQKLTEHKQEMASVSMKSLFEADPKRAEKYTTQAAGWTLDYAKNRANEKTLSLLTDLAKEAGLESAIKGMFSGAHINNTEDRSVLHIALRASQAQETLMVDGVNVLAEVRATLKQMEAFVTQLHNGEWKGYTGKRITDVISIGIGGSYLGPKVVAEALTPYKKDGIKVHFVANIDGSDITGKLKLVNPETTVFVISSKTFGTLETLSNANAARDWFLSNGGSQSDVSKHFAAVSSNVKKAVDFGMAEENIFPMWDWVGGRYSLWSAIGLPVAIAVGMDNFYELLDGAHQMDEHFRTTPFEENLPVIMGTLGVWYINFHNAQTHALIPYDHYLRAMPAHIQQLDMESNGKSTLLNGDGVETDTGPIIWGGAGTNGQHAYHQLLHQGTRLVPVDFIVPLASHNPIGEHHAQLFANCLSQSQALMVGKTLEQAQQELRDAGASPDQVEAIAPHKVIKGNRPSNTLLTDKMTPATVGALIALYEHRTFVQGTIWGINSFDQWGVELGKVLGTDIYNRLVSDSDNSALDASTQALIKAFKKAQA.

The Proton donor role is filled by E354. Active-site residues include H385 and K513.

Belongs to the GPI family.

The protein localises to the cytoplasm. The enzyme catalyses alpha-D-glucose 6-phosphate = beta-D-fructose 6-phosphate. It participates in carbohydrate biosynthesis; gluconeogenesis. Its pathway is carbohydrate degradation; glycolysis; D-glyceraldehyde 3-phosphate and glycerone phosphate from D-glucose: step 2/4. Its function is as follows. Catalyzes the reversible isomerization of glucose-6-phosphate to fructose-6-phosphate. This chain is Glucose-6-phosphate isomerase, found in Marinomonas sp. (strain MWYL1).